The chain runs to 188 residues: ATP synthase subunit delta (188 aa).

Belongs to the ATPase delta chain family. F-type ATPases have 2 components, F(1) - the catalytic core - and F(0) - the membrane proton channel. F(1) has five subunits: alpha(3), beta(3), gamma(1), delta(1), epsilon(1). F(0) has three main subunits: a(1), b(2) and c(10-14). The alpha and beta chains form an alternating ring which encloses part of the gamma chain. F(1) is attached to F(0) by a central stalk formed by the gamma and epsilon chains, while a peripheral stalk is formed by the delta and b chains.

It is found in the cell inner membrane. Its function is as follows. F(1)F(0) ATP synthase produces ATP from ADP in the presence of a proton or sodium gradient. F-type ATPases consist of two structural domains, F(1) containing the extramembraneous catalytic core and F(0) containing the membrane proton channel, linked together by a central stalk and a peripheral stalk. During catalysis, ATP synthesis in the catalytic domain of F(1) is coupled via a rotary mechanism of the central stalk subunits to proton translocation. This protein is part of the stalk that links CF(0) to CF(1). It either transmits conformational changes from CF(0) to CF(1) or is implicated in proton conduction. This is ATP synthase subunit delta from Paracoccus denitrificans (strain Pd 1222).